Reading from the N-terminus, the 1330-residue chain is ESX-3 secretion system protein EccC3 (1330 aa).

2 helical membrane-spanning segments follow: residues 43–63 (LPYL…ATGM) and 65–85 (VISP…TALY). FtsK domains lie at 456-662 (GEPL…SVSR), 811-1000 (RDPL…RDSN), and 1090-1280 (LAPV…ADSG). Residues 479–486 (GMTGSGKS), 829–836 (GGPKSGKS), and 1107–1114 (GDARSGKT) each bind ATP.

Part of the ESX-3 / type VII secretion system (T7SS), which is composed of cytosolic and membrane components. The ESX-3 membrane complex is composed of EccB3, EccC3, EccD3 and EccE3.

It is found in the cell inner membrane. Its function is as follows. Part of the ESX-3 specialized secretion system, which is important for iron and zinc uptake or homeostasis. This Mycobacterium tuberculosis (strain CDC 1551 / Oshkosh) protein is ESX-3 secretion system protein EccC3.